The following is a 397-amino-acid chain: MKILVVNCGSSSLKYQLIDITSEEALAKGLVERIGIEGSILTQKVNGEKYIIEEPMKDHKKAIELVLKALVDKEHGVISDMSEIAAVGHRVVHGGEKYASSVLIDDEVMKALEDCVKLAPLHNPPNIIGINACRELMPKTPMVAVFDTAFHQTLPDYAYMYPLPYELYEQNGIRKYGFHGTSHRYVSSVASEMMEKDLKDLKVITCHLGNGASLCAVKEGKSVETSMGFTPLAGLAMGTRCGDIDPAILLFMERELKMSPDEVDTVINKKSGVLGISGVSSDFRDIEGAAEEGNKRAKLALDVYHYTVRQTIGAYTAVLNGVDAIVFTAGLGENSAASREEILNGLEYLGIKIDAEKNKQRGKQIEISTEDSKVKVFVIPTDEELMIARDTKEITVK.

N7 contributes to the Mg(2+) binding site. K14 contacts ATP. Residue R90 participates in substrate binding. D147 functions as the Proton donor/acceptor in the catalytic mechanism. Residues 207–211, 282–284, and 330–334 each bind ATP; these read HLGNG, DFR, and GLGEN. Residue E383 participates in Mg(2+) binding.

The protein belongs to the acetokinase family. In terms of assembly, homodimer. Mg(2+) serves as cofactor. Mn(2+) is required as a cofactor.

It is found in the cytoplasm. It catalyses the reaction acetate + ATP = acetyl phosphate + ADP. It participates in metabolic intermediate biosynthesis; acetyl-CoA biosynthesis; acetyl-CoA from acetate: step 1/2. In terms of biological role, catalyzes the formation of acetyl phosphate from acetate and ATP. Can also catalyze the reverse reaction. This is Acetate kinase from Clostridium botulinum (strain Okra / Type B1).